The primary structure comprises 154 residues: Crossover junction endodeoxyribonuclease RuvC (154 aa).

Active-site residues include Asp-7, Glu-67, and Asp-139. Asp-7, Glu-67, and Asp-139 together coordinate Mg(2+).

This sequence belongs to the RuvC family. In terms of assembly, homodimer which binds Holliday junction (HJ) DNA. The HJ becomes 2-fold symmetrical on binding to RuvC with unstacked arms; it has a different conformation from HJ DNA in complex with RuvA. In the full resolvosome a probable DNA-RuvA(4)-RuvB(12)-RuvC(2) complex forms which resolves the HJ. Mg(2+) is required as a cofactor.

It is found in the cytoplasm. It carries out the reaction Endonucleolytic cleavage at a junction such as a reciprocal single-stranded crossover between two homologous DNA duplexes (Holliday junction).. Functionally, the RuvA-RuvB-RuvC complex processes Holliday junction (HJ) DNA during genetic recombination and DNA repair. Endonuclease that resolves HJ intermediates. Cleaves cruciform DNA by making single-stranded nicks across the HJ at symmetrical positions within the homologous arms, yielding a 5'-phosphate and a 3'-hydroxyl group; requires a central core of homology in the junction. The consensus cleavage sequence is 5'-(A/T)TT(C/G)-3'. Cleavage occurs on the 3'-side of the TT dinucleotide at the point of strand exchange. HJ branch migration catalyzed by RuvA-RuvB allows RuvC to scan DNA until it finds its consensus sequence, where it cleaves and resolves the cruciform DNA. This Synechococcus sp. (strain WH7803) protein is Crossover junction endodeoxyribonuclease RuvC.